Consider the following 412-residue polypeptide: Divalent metal cation transporter MntH (412 aa).

The Cytoplasmic portion of the chain corresponds to 1 to 19 (MTNYRVESSSGRAARKMRL). Residues 20-39 (ALMGPAFIAAIGYIDPGNFA) traverse the membrane as a helical segment. Residues 40 to 51 (TNIQAGASFGYQ) lie on the Periplasmic side of the membrane. The chain crosses the membrane as a helical span at residues 52-71 (LLWVVVWANLMAMLIQILSA). Residues 72 to 95 (KLGIATGKNLAEQIRDHYPRPVVW) are Cytoplasmic-facing. Residues 96–118 (FYWVQAEIIAMATDLAEFIGAAI) form a helical membrane-spanning segment. Residues 119 to 125 (GFKLILG) lie on the Periplasmic side of the membrane. The helical transmembrane segment at 126–145 (VSLLQGAVLTGIATFLILML) threads the bilayer. The Cytoplasmic portion of the chain corresponds to 146–155 (QRRGQKPLEK). Residues 156 to 175 (VIGGLLLFVAAAYIVELIFS) form a helical membrane-spanning segment. Residues 176-196 (QPNLAQLGKGMVIPSLPTSEA) lie on the Periplasmic side of the membrane. Residues 197-220 (VFLAAGVLGATIMPHVIYLHSSLT) traverse the membrane as a helical segment. Residues 221 to 238 (QHLHGGSRQQRYSATKWD) lie on the Cytoplasmic side of the membrane. Residues 239–258 (VAIAMTIAGFVNLVMMATAA) traverse the membrane as a helical segment. Residues 259 to 276 (AAFHFSGHTGVADLDEAY) lie on the Periplasmic side of the membrane. The helical transmembrane segment at 277–297 (LTLQPLLSHAAATVFGLSLVA) threads the bilayer. The Cytoplasmic portion of the chain corresponds to 298 to 327 (AGLSSTVVGTLAGQVVMQGFIRFHIPLWVR). A helical membrane pass occupies residues 328 to 344 (RTVTMLPSFIVILMGLD). The Periplasmic portion of the chain corresponds to 345 to 350 (PTRILV). The chain crosses the membrane as a helical span at residues 351-370 (MSQVLLSFGIALALVPLLIF). Topologically, residues 371-387 (TSDSKLMGDLVNSKRVK) are cytoplasmic. Residues 388-406 (QTGWVIVVLVVALNIWLLV) traverse the membrane as a helical segment. Residues 407 to 412 (GTALGL) lie on the Periplasmic side of the membrane.

This sequence belongs to the NRAMP family.

It is found in the cell inner membrane. Its function is as follows. H(+)-stimulated, divalent metal cation uptake system. This Shigella flexneri serotype 5b (strain 8401) protein is Divalent metal cation transporter MntH.